A 308-amino-acid polypeptide reads, in one-letter code: Putative glutamine amidotransferase Rv2859c (308 aa).

The interval Met-1–Gly-62 is disordered. Composition is skewed to low complexity over residues Pro-13–Pro-24, Pro-31–Pro-42, and Pro-49–Leu-61. The Glutamine amidotransferase type-1 domain occupies Arg-78–Arg-301. The active-site Nucleophile is the Cys-177. Active-site residues include His-277 and Glu-279. Lys-289 participates in a covalent cross-link: Isoglutamyl lysine isopeptide (Lys-Gln) (interchain with Q-Cter in protein Pup).

This Mycobacterium tuberculosis (strain ATCC 25618 / H37Rv) protein is Putative glutamine amidotransferase Rv2859c.